The primary structure comprises 358 residues: Magnesium-protoporphyrin IX monomethyl ester [oxidative] cyclase (358 aa).

This sequence belongs to the AcsF family. Requires Fe cation as cofactor.

It carries out the reaction Mg-protoporphyrin IX 13-monomethyl ester + 3 NADPH + 3 O2 + 2 H(+) = 3,8-divinyl protochlorophyllide a + 3 NADP(+) + 5 H2O. Its pathway is porphyrin-containing compound metabolism; chlorophyll biosynthesis (light-independent). Catalyzes the formation of the isocyclic ring in chlorophyll biosynthesis. Mediates the cyclase reaction, which results in the formation of divinylprotochlorophyllide (Pchlide) characteristic of all chlorophylls from magnesium-protoporphyrin IX 13-monomethyl ester (MgPMME). This is Magnesium-protoporphyrin IX monomethyl ester [oxidative] cyclase from Synechococcus elongatus (strain ATCC 33912 / PCC 7942 / FACHB-805) (Anacystis nidulans R2).